The following is a 456-amino-acid chain: Probable tRNA(Ile)-lysidine synthase (456 aa).

30–35 (SGGVDS) is a binding site for ATP.

This sequence belongs to the tRNA(Ile)-lysidine synthase family.

The protein localises to the cytoplasm. It carries out the reaction cytidine(34) in tRNA(Ile2) + L-lysine + ATP = lysidine(34) in tRNA(Ile2) + AMP + diphosphate + H(+). Ligates lysine onto the cytidine present at position 34 of the AUA codon-specific tRNA(Ile) that contains the anticodon CAU, in an ATP-dependent manner. Cytidine is converted to lysidine, thus changing the amino acid specificity of the tRNA from methionine to isoleucine. The chain is Probable tRNA(Ile)-lysidine synthase from Schizosaccharomyces pombe (strain 972 / ATCC 24843) (Fission yeast).